The primary structure comprises 86 residues: MDAFDVIKTPIVSEKTMKLIEEENRLVFYVERKATKADISAAIKELFDAEVADINTSITPKGKKKAYITLKAEYNAGEVAASLGIY.

This sequence belongs to the universal ribosomal protein uL23 family. Part of the 50S ribosomal subunit. Contacts protein L29.

In terms of biological role, binds to 23S rRNA. One of the proteins that surrounds the polypeptide exit tunnel on the outside of the ribosome. The protein is Large ribosomal subunit protein uL23 of Methanococcus maripaludis (strain C6 / ATCC BAA-1332).